Consider the following 422-residue polypeptide: O-mycaminosyltylonolide 6-deoxyallosyltransferase (422 aa).

It belongs to the glycosyltransferase 28 family.

It catalyses the reaction 5-O-beta-D-mycaminosyltylonolide + dTDP-6-deoxy-alpha-D-allose = demethyllactenocin + dTDP + H(+). Its function is as follows. Involved in the biosynthesis of the macrolide antibiotic tylosin derived from the polyketide lactone tylactone. Catalyzes the transfer of 6-deoxy-alpha-D-allose from dTDP-6-deoxy-alpha-D-allose to O-mycaminosyltylonolide (OMT) to yield demethyllactenocin. The protein is O-mycaminosyltylonolide 6-deoxyallosyltransferase of Streptomyces fradiae (Streptomyces roseoflavus).